Reading from the N-terminus, the 284-residue chain is Bifunctional protein FolD (284 aa).

Residues 166 to 168 (GAS) and Ile232 each bind NADP(+).

This sequence belongs to the tetrahydrofolate dehydrogenase/cyclohydrolase family. As to quaternary structure, homodimer.

It carries out the reaction (6R)-5,10-methylene-5,6,7,8-tetrahydrofolate + NADP(+) = (6R)-5,10-methenyltetrahydrofolate + NADPH. It catalyses the reaction (6R)-5,10-methenyltetrahydrofolate + H2O = (6R)-10-formyltetrahydrofolate + H(+). It participates in one-carbon metabolism; tetrahydrofolate interconversion. Its function is as follows. Catalyzes the oxidation of 5,10-methylenetetrahydrofolate to 5,10-methenyltetrahydrofolate and then the hydrolysis of 5,10-methenyltetrahydrofolate to 10-formyltetrahydrofolate. The polypeptide is Bifunctional protein FolD (Tolumonas auensis (strain DSM 9187 / NBRC 110442 / TA 4)).